The following is a 518-amino-acid chain: Integrator complex subunit 14 (518 aa).

Residues 2 to 204 (PTVVVMDVSL…KNVQSMFGKL (203 aa)) form the VWFA domain. Mg(2+) contacts are provided by serine 10, serine 12, and threonine 86. Lysine 418 carries the post-translational modification N6-acetyllysine.

The protein belongs to the Integrator subunit 14 family. Component of the Integrator complex, composed of core subunits INTS1, INTS2, INTS3, INTS4, INTS5, INTS6, INTS7, INTS8, INTS9/RC74, INTS10, INTS11/CPSF3L, INTS12, INTS13, INTS14 and INTS15. The core complex associates with protein phosphatase 2A subunits PPP2CA and PPP2R1A, to form the Integrator-PP2A (INTAC) complex. INTS14 is part of the tail subcomplex, composed of INTS10, INTS13, INTS14 and INTS15.

It localises to the nucleus. Component of the integrator complex, a multiprotein complex that terminates RNA polymerase II (Pol II) transcription in the promoter-proximal region of genes. The integrator complex provides a quality checkpoint during transcription elongation by driving premature transcription termination of transcripts that are unfavorably configured for transcriptional elongation: the complex terminates transcription by (1) catalyzing dephosphorylation of the C-terminal domain (CTD) of Pol II subunit POLR2A/RPB1 and SUPT5H/SPT5, (2) degrading the exiting nascent RNA transcript via endonuclease activity and (3) promoting the release of Pol II from bound DNA. The integrator complex is also involved in terminating the synthesis of non-coding Pol II transcripts, such as enhancer RNAs (eRNAs), small nuclear RNAs (snRNAs), telomerase RNAs and long non-coding RNAs (lncRNAs). Within the integrator complex, INTS14 is part of the integrator tail module that acts as a platform for the recruitment of transcription factors at promoters. The chain is Integrator complex subunit 14 from Bos taurus (Bovine).